The primary structure comprises 65 residues: Hirudin-3B (65 aa).

The segment at 1 to 3 is interaction with thrombin active site; it reads VVY. 3 cysteine pairs are disulfide-bonded: Cys6–Cys14, Cys16–Cys28, and Cys22–Cys39. Residues 40-65 are disordered; sequence VTGEGTPKPQSHNDGDFEEIPEEYLQ. A glycan (O-linked (GalNAc...) threonine) is linked at Thr45. The tract at residues 55-65 is interaction with fibrinogen-binding exosite of thrombin; sequence DFEEIPEEYLQ. The segment covering 55-65 has biased composition (acidic residues); it reads DFEEIPEEYLQ. Residue Tyr63 is modified to Sulfotyrosine.

It belongs to the protease inhibitor I14 (hirudin) family.

It localises to the secreted. In terms of biological role, hirudin is a potent thrombin-specific protease inhibitor. It forms a stable non-covalent complex with alpha-thrombin, thereby abolishing its ability to cleave fibrinogen. This Hirudo medicinalis (Medicinal leech) protein is Hirudin-3B.